A 363-amino-acid chain; its full sequence is 5-formaminoimidazole-4-carboxamide-1-(beta)-D-ribofuranosyl 5'-monophosphate synthetase (363 aa).

His-29 and Ser-96 together coordinate 5-amino-1-(5-phospho-beta-D-ribosyl)imidazole-4-carboxamide. Residues 118–350 (RDILRWESER…MGRRVAREIR (233 aa)) enclose the ATP-grasp domain. ATP is bound by residues 148-210 (PEEI…TNFC) and Glu-232. Asn-260 lines the 5-amino-1-(5-phospho-beta-D-ribosyl)imidazole-4-carboxamide pocket. The Mg(2+) site is built by Gln-299 and Glu-312.

This sequence belongs to the phosphohexose mutase family. Mg(2+) serves as cofactor. It depends on Mn(2+) as a cofactor.

It carries out the reaction 5-amino-1-(5-phospho-beta-D-ribosyl)imidazole-4-carboxamide + formate + ATP = 5-formamido-1-(5-phospho-D-ribosyl)imidazole-4-carboxamide + ADP + phosphate. It functions in the pathway purine metabolism; IMP biosynthesis via de novo pathway; 5-formamido-1-(5-phospho-D-ribosyl)imidazole-4-carboxamide from 5-amino-1-(5-phospho-D-ribosyl)imidazole-4-carboxamide (formate route): step 1/1. Functionally, catalyzes the ATP- and formate-dependent formylation of 5-aminoimidazole-4-carboxamide-1-beta-d-ribofuranosyl 5'-monophosphate (AICAR) to 5-formaminoimidazole-4-carboxamide-1-beta-d-ribofuranosyl 5'-monophosphate (FAICAR) in the absence of folates. The protein is 5-formaminoimidazole-4-carboxamide-1-(beta)-D-ribofuranosyl 5'-monophosphate synthetase of Methanothermobacter thermautotrophicus (strain ATCC 29096 / DSM 1053 / JCM 10044 / NBRC 100330 / Delta H) (Methanobacterium thermoautotrophicum).